The sequence spans 503 residues: Probable folate-biopterin transporter 6 (503 aa).

12 helical membrane passes run 56–76 (SFVLGVVLVYGVNQGFSGSIF), 101–121 (LYYIPWVMRPIWGLFTDVFPI), 128–148 (PYFVVSGVLGLVSAIAIVVLG), 153–173 (ALALSCLLGVSAAMAIADVVI), 194–214 (LCMVCSSAGALVGYATSGVFV), 221–241 (GALGVLAFSPATIVILGFFIY), 281–301 (LYMFISLALNISTHEGHFYWY), 314–334 (FVGIIYAVGALASMFGVLIYH), 344–364 (NILFFAQLLYVFSGMLDLVFI), 369–389 (LTLGIPDSLFVITEESFTKMI), 404–424 (LCPLGIEGTFFAFLMCIDSFG), and 450–470 (WLVILIRNILRLVTVCFVFLV).

Belongs to the major facilitator superfamily. Folate-biopterin transporter (TC 2.A.71) family.

Its subcellular location is the membrane. Could mediate folate transport. The sequence is that of Probable folate-biopterin transporter 6 from Arabidopsis thaliana (Mouse-ear cress).